The sequence spans 567 residues: PEX5-related protein (567 aa).

The disordered stretch occupies residues 56 to 105 (SEPVSQPQTKAKKSEPSSKSSSLKKKADGSDLISADAEQRAQALRGPETS). The residue at position 146 (serine 146) is a Phosphoserine. A disordered region spans residues 150 to 169 (LWSAEHRSQPELSTGKSALN). Phosphoserine occurs at positions 194, 198, and 202. TPR repeat units follow at residues 267 to 300 (WPGAFEEGLKRLKEGDLPVTILFMEAAILQDPGD), 301 to 334 (AEAWQFLGITQAENENEQAAIVALQRCLELQPNN), and 336 to 368 (KALMALAVSYTNTSHQQDACEALKNWIKQNPKY). Serine 386 and serine 388 each carry phosphoserine. TPR repeat units lie at residues 415-448 (PDLQTGLGVLFHLSGEFNRAIDAFNAALTVRPED), 450-482 (SLWNRLGATLANGDRSEEAVEAYTRALEIQPGF), and 484-516 (RSRYNLGISCINLGAYREAVSNFLTALSLQRKS).

Belongs to the peroxisomal targeting signal receptor family. As to quaternary structure, interacts with RAB8B. Forms an obligate 4:4 complex with HCN2. Interacts with HCN3. Interacts with HCN4 with a 4:4 HCN4:PEX5L stoichiometry; reduces the effects of cAMP on the voltage-dependence and rate of activation of HCN4.

The protein resides in the cytoplasm. It is found in the membrane. Accessory subunit of hyperpolarization-activated cyclic nucleotide-gated (HCN) channels, regulating their cell-surface expression and cyclic nucleotide dependence. The protein is PEX5-related protein (Pex5l) of Mus musculus (Mouse).